The primary structure comprises 622 residues: Low affinity potassium transport system protein Kup (622 aa).

A run of 12 helical transmembrane segments spans residues 9 to 29 (LPAI…TSPL), 49 to 69 (VFGF…IKYL), 103 to 123 (VIMG…TPAI), 137 to 157 (PQLD…LFMI), 165 to 185 (VGKL…GLGL), 213 to 233 (VSFI…ALYA), 247 to 267 (WFTV…ALLL), 276 to 296 (PFFL…AALA), 337 to 357 (IYIP…IVSF), 363 to 383 (LAAA…ILST), 396 to 416 (FVAL…TANL), and 419 to 439 (LLSG…VMTT).

This sequence belongs to the HAK/KUP transporter (TC 2.A.72) family.

It is found in the cell inner membrane. It catalyses the reaction K(+)(in) + H(+)(in) = K(+)(out) + H(+)(out). In terms of biological role, responsible for the low-affinity transport of potassium into the cell. Likely operates as a K(+):H(+) symporter. This chain is Low affinity potassium transport system protein Kup, found in Escherichia fergusonii (strain ATCC 35469 / DSM 13698 / CCUG 18766 / IAM 14443 / JCM 21226 / LMG 7866 / NBRC 102419 / NCTC 12128 / CDC 0568-73).